A 325-amino-acid chain; its full sequence is NADH-quinone oxidoreductase subunit H (325 aa).

8 consecutive transmembrane segments (helical) span residues 11–31 (ILLT…CGAF), 81–101 (VIFT…FAIV), 114–134 (IGIL…LFAG), 154–174 (LSYE…AGSF), 186–206 (VWNV…GVAV), 237–257 (FFVG…TLFF), 265–285 (LPPF…FILI), and 304–324 (ICLP…LWQA).

It belongs to the complex I subunit 1 family. In terms of assembly, NDH-1 is composed of 13 different subunits. Subunits NuoA, H, J, K, L, M, N constitute the membrane sector of the complex.

It localises to the cell inner membrane. It carries out the reaction a quinone + NADH + 5 H(+)(in) = a quinol + NAD(+) + 4 H(+)(out). Its function is as follows. NDH-1 shuttles electrons from NADH, via FMN and iron-sulfur (Fe-S) centers, to quinones in the respiratory chain. The immediate electron acceptor for the enzyme in this species is believed to be ubiquinone. Couples the redox reaction to proton translocation (for every two electrons transferred, four hydrogen ions are translocated across the cytoplasmic membrane), and thus conserves the redox energy in a proton gradient. This subunit may bind ubiquinone. The protein is NADH-quinone oxidoreductase subunit H of Escherichia fergusonii (strain ATCC 35469 / DSM 13698 / CCUG 18766 / IAM 14443 / JCM 21226 / LMG 7866 / NBRC 102419 / NCTC 12128 / CDC 0568-73).